A 629-amino-acid polypeptide reads, in one-letter code: tRNA uridine 5-carboxymethylaminomethyl modification enzyme MnmG (629 aa).

FAD is bound by residues 15–20 (GAGHAG), Val-127, and Ser-182. Positions 203-226 (TPPRVKSSTIDYSKTEEQPGDDHP) are disordered. The segment covering 215 to 226 (SKTEEQPGDDHP) has biased composition (basic and acidic residues). NAD(+) is bound at residue 274-288 (GARYCPSIEDKIVRF). Residue Gln-371 participates in FAD binding.

This sequence belongs to the MnmG family. As to quaternary structure, homodimer. Heterotetramer of two MnmE and two MnmG subunits. FAD serves as cofactor.

It is found in the cytoplasm. Its function is as follows. NAD-binding protein involved in the addition of a carboxymethylaminomethyl (cmnm) group at the wobble position (U34) of certain tRNAs, forming tRNA-cmnm(5)s(2)U34. The chain is tRNA uridine 5-carboxymethylaminomethyl modification enzyme MnmG from Listeria innocua serovar 6a (strain ATCC BAA-680 / CLIP 11262).